Consider the following 179-residue polypeptide: Sec-independent protein translocase protein TatB (179 aa).

A helical transmembrane segment spans residues 2 to 22; sequence FNGVGWGEVVVLLLIGLFVFG. Positions 98–109 are enriched in low complexity; it reads LLGDDPPAAPSL. Residues 98 to 179 are disordered; that stretch reads LLGDDPPAAP…TEVPFDSDAT (82 aa).

This sequence belongs to the TatB family. As to quaternary structure, the Tat system comprises two distinct complexes: a TatABC complex, containing multiple copies of TatA, TatB and TatC subunits, and a separate TatA complex, containing only TatA subunits. Substrates initially bind to the TatABC complex, which probably triggers association of the separate TatA complex to form the active translocon.

It localises to the cell membrane. Functionally, part of the twin-arginine translocation (Tat) system that transports large folded proteins containing a characteristic twin-arginine motif in their signal peptide across membranes. Together with TatC, TatB is part of a receptor directly interacting with Tat signal peptides. TatB may form an oligomeric binding site that transiently accommodates folded Tat precursor proteins before their translocation. This chain is Sec-independent protein translocase protein TatB, found in Frankia casuarinae (strain DSM 45818 / CECT 9043 / HFP020203 / CcI3).